Here is a 656-residue protein sequence, read N- to C-terminus: Phosphoprotein 85 (656 aa).

2 disordered regions span residues methionine 1–glutamate 174 and asparagine 615–cysteine 656. Positions serine 46 to glutamate 55 are enriched in basic and acidic residues. 2 stretches are compositionally biased toward low complexity: residues serine 59–serine 70 and aspartate 140–serine 160. Residues serine 625–aspartate 634 show a composition bias toward pro residues. A compositionally biased stretch (basic and acidic residues) spans tyrosine 635–cysteine 656.

It belongs to the herpesviridae pp85 family. Phosphorylated.

It is found in the virion tegument. The protein localises to the host cytoplasm. The polypeptide is Phosphoprotein 85 (UL25) (Homo sapiens (Human)).